A 1073-amino-acid chain; its full sequence is Carbamoyl phosphate synthase large chain (1073 aa).

Residues 1–403 (MPKRTDIKSI…SLQKALRGLE (403 aa)) form a carboxyphosphate synthetic domain region. Positions 129, 169, 175, 176, 208, 210, 215, 241, 242, 243, 285, and 299 each coordinate ATP. An ATP-grasp 1 domain is found at 133 to 328 (DKAMKSIGLA…IARVAAKLAV (196 aa)). Residues Gln-285, Glu-299, and Asn-301 each coordinate Mg(2+). Residues Gln-285, Glu-299, and Asn-301 each coordinate Mn(2+). The oligomerization domain stretch occupies residues 404 to 553 (VGVCGLDPKL…YSTYEEECEA (150 aa)). Residues 554–935 (NPSTRDKIMI…AFAKAQMGAS (382 aa)) form a carbamoyl phosphate synthetic domain region. The ATP-grasp 2 domain maps to 678-869 (QQMVERLNLR…LAMIAARVMA (192 aa)). The ATP site is built by Arg-714, His-753, Leu-755, Glu-760, Gly-785, Val-786, His-787, Ser-788, Gln-828, and Glu-840. Positions 828, 840, and 842 each coordinate Mg(2+). Mn(2+) is bound by residues Gln-828, Glu-840, and Asn-842. An MGS-like domain is found at 936–1073 (EVLPTGGTAF…LQDLHAGLKA (138 aa)). Residues 936 to 1073 (EVLPTGGTAF…LQDLHAGLKA (138 aa)) are allosteric domain.

It belongs to the CarB family. In terms of assembly, composed of two chains; the small (or glutamine) chain promotes the hydrolysis of glutamine to ammonia, which is used by the large (or ammonia) chain to synthesize carbamoyl phosphate. Tetramer of heterodimers (alpha,beta)4. It depends on Mg(2+) as a cofactor. The cofactor is Mn(2+).

It carries out the reaction hydrogencarbonate + L-glutamine + 2 ATP + H2O = carbamoyl phosphate + L-glutamate + 2 ADP + phosphate + 2 H(+). The catalysed reaction is hydrogencarbonate + NH4(+) + 2 ATP = carbamoyl phosphate + 2 ADP + phosphate + 2 H(+). It participates in amino-acid biosynthesis; L-arginine biosynthesis; carbamoyl phosphate from bicarbonate: step 1/1. Its pathway is pyrimidine metabolism; UMP biosynthesis via de novo pathway; (S)-dihydroorotate from bicarbonate: step 1/3. In terms of biological role, large subunit of the glutamine-dependent carbamoyl phosphate synthetase (CPSase). CPSase catalyzes the formation of carbamoyl phosphate from the ammonia moiety of glutamine, carbonate, and phosphate donated by ATP, constituting the first step of 2 biosynthetic pathways, one leading to arginine and/or urea and the other to pyrimidine nucleotides. The large subunit (synthetase) binds the substrates ammonia (free or transferred from glutamine from the small subunit), hydrogencarbonate and ATP and carries out an ATP-coupled ligase reaction, activating hydrogencarbonate by forming carboxy phosphate which reacts with ammonia to form carbamoyl phosphate. This chain is Carbamoyl phosphate synthase large chain, found in Pseudomonas syringae pv. tomato (strain ATCC BAA-871 / DC3000).